The primary structure comprises 199 residues: Nitrile hydratase subunit alpha (199 aa).

Fe(3+) is bound by residues Cys-102, Cys-105, Ser-106, and Cys-107. Residue Cys-105 is modified to Cysteine sulfinic acid (-SO2H). Residue Cys-107 is modified to Cysteine sulfenic acid (-SOH).

The protein belongs to the nitrile hydratase subunit alpha family. In terms of assembly, heterodimer of an alpha and a beta chain. Requires Fe(3+) as cofactor. Oxidation on Cys-105 is essential for the activity. In terms of processing, oxidation on Cys-107 stabilizes the Fe-NO ligand coordinated in the inactive form.

The enzyme catalyses an aliphatic primary amide = an aliphatic nitrile + H2O. Its activity is regulated as follows. Inactivated by oxidation of Cys-107 to a sulfenic acid. In terms of biological role, NHase catalyzes the hydration of various nitrile compounds to the corresponding amides. Industrial production of acrylamide is now being developed using some of the enzymes of this class. The protein is Nitrile hydratase subunit alpha (nthA) of Rhodococcus sp.